The following is a 92-amino-acid chain: Small ribosomal subunit protein uS19 (92 aa).

Belongs to the universal ribosomal protein uS19 family.

Its function is as follows. Protein S19 forms a complex with S13 that binds strongly to the 16S ribosomal RNA. The sequence is that of Small ribosomal subunit protein uS19 from Rhodopseudomonas palustris (strain BisB18).